The chain runs to 276 residues: Rhomboid protease GlpG (276 aa).

Transmembrane regions (helical) follow at residues 94–114 (GPVT…MSLI), 142–162 (IFMH…WYLG), 169–189 (LGSG…GYVQ), 192–212 (FSGP…GYVW), 229–249 (LIIF…GMSM), and 250–270 (ANGA…VDTL). Catalysis depends on Ser201, which acts as the Nucleophile. His254 is an active-site residue.

This sequence belongs to the peptidase S54 family.

It localises to the cell inner membrane. The enzyme catalyses Cleaves type-1 transmembrane domains using a catalytic dyad composed of serine and histidine that are contributed by different transmembrane domains.. In terms of biological role, rhomboid-type serine protease that catalyzes intramembrane proteolysis. The chain is Rhomboid protease GlpG from Salmonella paratyphi A (strain ATCC 9150 / SARB42).